Consider the following 265-residue polypeptide: 3-methyl-2-oxobutanoate hydroxymethyltransferase (265 aa).

Residues Asp45 and Asp84 each coordinate Mg(2+). 3-methyl-2-oxobutanoate is bound by residues 45-46 (DS), Asp84, and Lys112. Glu114 is a binding site for Mg(2+). Glu181 (proton acceptor) is an active-site residue.

The protein belongs to the PanB family. In terms of assembly, homodecamer; pentamer of dimers. The cofactor is Mg(2+).

Its subcellular location is the cytoplasm. The catalysed reaction is 3-methyl-2-oxobutanoate + (6R)-5,10-methylene-5,6,7,8-tetrahydrofolate + H2O = 2-dehydropantoate + (6S)-5,6,7,8-tetrahydrofolate. It participates in cofactor biosynthesis; (R)-pantothenate biosynthesis; (R)-pantoate from 3-methyl-2-oxobutanoate: step 1/2. Its function is as follows. Catalyzes the reversible reaction in which hydroxymethyl group from 5,10-methylenetetrahydrofolate is transferred onto alpha-ketoisovalerate to form ketopantoate. This is 3-methyl-2-oxobutanoate hydroxymethyltransferase from Yersinia pseudotuberculosis serotype IB (strain PB1/+).